The following is a 470-amino-acid chain: Uronate isomerase (470 aa).

This sequence belongs to the metallo-dependent hydrolases superfamily. Uronate isomerase family.

It catalyses the reaction D-glucuronate = D-fructuronate. The catalysed reaction is aldehydo-D-galacturonate = keto-D-tagaturonate. Its pathway is carbohydrate metabolism; pentose and glucuronate interconversion. The protein is Uronate isomerase of Escherichia coli O8 (strain IAI1).